The chain runs to 190 residues: Elongation factor P 2 (190 aa).

Belongs to the elongation factor P family.

The protein resides in the cytoplasm. The protein operates within protein biosynthesis; polypeptide chain elongation. Functionally, involved in peptide bond synthesis. Stimulates efficient translation and peptide-bond synthesis on native or reconstituted 70S ribosomes in vitro. Probably functions indirectly by altering the affinity of the ribosome for aminoacyl-tRNA, thus increasing their reactivity as acceptors for peptidyl transferase. This Chlamydia pneumoniae (Chlamydophila pneumoniae) protein is Elongation factor P 2 (efp2).